The chain runs to 156 residues: MPRKGPAPKRPLVVDPVYGSPTVTQLVNRVLVDGKKSTAERIVYGALEGVRDKTQGDPATVLKRALDNVRPSLEVKSRRVGGTTYQVPVDVRPSRATALAMRWLVDYSRVRREKTMTERLMNEILDASNGLGAAVKRREDTHKMAESNKAFAHYRW.

Belongs to the universal ribosomal protein uS7 family. In terms of assembly, part of the 30S ribosomal subunit. Contacts proteins S9 and S11.

Its function is as follows. One of the primary rRNA binding proteins, it binds directly to 16S rRNA where it nucleates assembly of the head domain of the 30S subunit. Is located at the subunit interface close to the decoding center, probably blocks exit of the E-site tRNA. In Beutenbergia cavernae (strain ATCC BAA-8 / DSM 12333 / CCUG 43141 / JCM 11478 / NBRC 16432 / NCIMB 13614 / HKI 0122), this protein is Small ribosomal subunit protein uS7.